Consider the following 427-residue polypeptide: Inward rectifier potassium channel 2 (427 aa).

Residues 1–81 (MGSVRTNRYS…IFTTCVDIRW (81 aa)) lie on the Cytoplasmic side of the membrane. The residue at position 76 (C76) is an S-nitrosocysteine. A helical transmembrane segment spans residues 82–106 (RWMLVIFCLAFVLSWLFFGCVFWLI). Over 107–128 (ALLHGDLDASKESKACVSEVNS) the chain is Extracellular. The segment at residues 129-140 (FTAAFLFSIETQ) is an intramembrane region (helical; Pore-forming). Residues 141-147 (TTIGYGF) constitute an intramembrane region (pore-forming). Positions 142-147 (TIGYGF) match the Selectivity filter motif. The Extracellular portion of the chain corresponds to 148–156 (RCVTDECPV). The helical transmembrane segment at 157-178 (AVFMVVFQSIVGCIIDAFIIGA) threads the bilayer. Topologically, residues 179–427 (VMAKMAKPKK…PRPLRRESEI (249 aa)) are cytoplasmic. Residues 181 to 208 (AKMAKPKKRNETLVFSHNAVIAMRDGKL) form a polyphosphoinositide (PIP2)-binding region. The disordered stretch occupies residues 384–427 (SKEEDDSENGVPESTSTDTPPDLDLHNQASVPLEPRPLRRESEI). The PDZ-binding motif lies at 425-427 (SEI).

This sequence belongs to the inward rectifier-type potassium channel (TC 1.A.2.1) family. KCNJ2 subfamily. Homotetramer. Homomultimeric and heteromultimeric association with KCNJ4/Kir2.3. Can form heteromeric channels with Kir2.6/KCNJ18. Associates, via its PDZ-recognition domain, with a complex containing LIN7A, LIN7B, LIN7C, DLG1, CASK and APBA1. In terms of processing, S-nitrosylation increases the open probability and inward rectifying currents.

It localises to the cell membrane. The protein resides in the sarcolemma. Its subcellular location is the T-tubule. It carries out the reaction K(+)(in) = K(+)(out). Its activity is regulated as follows. Activated by phosphatidylinositol 4,5 biphosphate (PtdIns(4,5)P2). Its function is as follows. Inward rectifier potassium channels are characterized by a greater tendency to allow potassium to flow into the cell rather than out of it. Their voltage dependence is regulated by the concentration of extracellular potassium; as external potassium is raised, the voltage range of the channel opening shifts to more positive voltages. The inward rectification is mainly due to the blockage of outward current by internal magnesium. Blocked by external barium or cesium. Probably participates in establishing action potential waveform and excitability of neuronal and muscle tissues. The sequence is that of Inward rectifier potassium channel 2 (KCNJ2) from Canis lupus familiaris (Dog).